A 219-amino-acid polypeptide reads, in one-letter code: Acetylxylan esterase (219 aa).

Residue Ser-15 is the Nucleophile of the active site. Catalysis depends on charge relay system residues Asp-191 and His-194.

This sequence belongs to the 'GDSL' lipolytic enzyme family. As to quaternary structure, homooctamer, presenting a unique donut-shaped quaternary structure built of two staggered tetrameric rings. The eight active sites are organized in four closely situated pairs, which face the relatively wide internal cavity.

The protein resides in the cytoplasm. It catalyses the reaction Deacetylation of xylans and xylo-oligosaccharides.. The protein operates within glycan degradation; xylan degradation. Functionally, acetylxylan esterase involved in the degradation of xylan, a major structural heterogeneous polysaccharide found in plant biomass representing the second most abundant polysaccharide in the biosphere, after cellulose. Cleaves acetyl side groups from the xylose backbone units of the hemicellulolytic polymer xylan and xylo-oligosaccharides. Hydrolyzes about 20%-30% of the available acetyl groups on fully acetylated birch wood xylan. Completely deacetylates xylobiose peracetate (fully acetylated), and is active on both the alpha- and beta-forms of the sugar. Also hydrolyzes fully acetylated methyl-beta-D-xylopyranoside and methyl-beta-D-glucopyranoside, and the synthetic substrates 2-naphthyl acetate, 4-nitrophenyl acetate, 4-methylumbelliferyl acetate, and phenyl acetate. This is Acetylxylan esterase from Geobacillus stearothermophilus (Bacillus stearothermophilus).